Consider the following 310-residue polypeptide: Transcription factor MYB53 (310 aa).

HTH myb-type domains follow at residues 9–61 and 62–116; these read ETGL…TNYL and RPDI…KKKL. DNA-binding regions (H-T-H motif) lie at residues 37 to 61 and 89 to 112; these read WSAL…TNYL and WSMI…NTHL.

Interacts with FBX5. Highly expressed in roots and at lower levels in leaves, stems and flowers.

The protein resides in the nucleus. Probable transcription factor. The chain is Transcription factor MYB53 from Arabidopsis thaliana (Mouse-ear cress).